Here is a 259-residue protein sequence, read N- to C-terminus: Leucine-rich repeat-containing protein 61 (259 aa).

LRR repeat units lie at residues 54–75 (NLEW…ASLR), 76–97 (QLAV…AACE), and 98–119 (NLQS…QCLA). Positions 138–178 (NPLCANASYWAVVRELLPGLKVIDGERVSGRGSELYQLCRD) constitute an LRRCT domain.

This chain is Leucine-rich repeat-containing protein 61 (Lrrc61), found in Mus musculus (Mouse).